Reading from the N-terminus, the 316-residue chain is UPF0324 membrane protein SO_4708 (316 aa).

9 helical membrane passes run 61 to 80, 85 to 107, 114 to 136, 146 to 168, 175 to 197, 207 to 226, 233 to 252, 262 to 281, and 293 to 315; these read LLSY…AAIE, NLGL…TRAL, GHLI…APAV, ALAC…GHLL, FGVW…SAYG, IKLA…ALIF, LNLP…AHWL, LFMV…GAGI, and PLLL…ILYF.

This sequence belongs to the UPF0324 family.

The protein localises to the cell membrane. This Shewanella oneidensis (strain ATCC 700550 / JCM 31522 / CIP 106686 / LMG 19005 / NCIMB 14063 / MR-1) protein is UPF0324 membrane protein SO_4708.